Reading from the N-terminus, the 1818-residue chain is WREKLEAEVQRQNLYQERVAHMESSLGQARERLGRAVRGAREGRLELQQLQAERDGLQERREALEQRLEGRWQDRLQATEKFQLAVEALEQEKQGLQSQIAQILEGGQQLAHLKMSLSLEVATYRTLLEAENSRLQTPGRSSQASLGFQDPKLKLRFLGTPENQHLGSVLPVLSPTPLPSPLPDTLETPVTAFLKTQEFLQARIPTLASTPIPPMTEAPCLAKAEVRAQDAPLSLLQTQGERQQAPEPLWAKATASVSTGVLTELEEAGGQQPGHFPEDATASAPSLSPHHPVLEAKDGDSTESRGSSIFQEDEGQIWELVEKEAAIELKVESSLAQETQEDGLHTEEIQDSQGPLQKETLEALGEEPLMSLKIQNHETPGKENCNSLRSVDENQGTLKSPEEEKQTLLKSLEEKDVEVEKTLEKGVPELSKPLGKEDPRIEDQELMSPEGTLETLSFIGKRNEEVVRSSEEENIESLAAFKKESQHPLGCPEEEIQRVERLIEKEGQESLSSPEEEDQETDRPLEKENGEPLKPVEEEDQLFETLIEKEGQESLSSPEEEDQETDRPLEKEEDQLVERLVEKEGQESLSSPEEEDQETDRPLEKENGEPLKPVEEEDQLFETLIEKEGQESLSSPEEEDQETDRPLEKEEDQLVERLVEKEGQESLSSPEEEDQETDRPLEKEEDQLVETLIEKQGQECLSSPEEEDQETDRPLEKEEDQRVERLIEKEGQESLSSPEEEDQETYRLLEKENGEPLKPVEEEDQRVERLIEKEDQESLSSLKEEDQRIVKTLERENWESLRSLDENLDTVMPLESKNQKPLKSLEAEEEQRIVKPLEKVSQDSIGSLEKENVELLRSLEDDQITESLLKKGTQESLESHEDRNQETQDPQRFLEEEGQGIVKQLEKENQGFLGSLEEEKVVKRSLERENHEPLSSVEKDWVTESLLERESQDSGKSLEGQEAFRCLGKEDPESLQFPEVQDQEIQRSLQQETQQTLGALGDEQMASEPPEKVGPELLKFLGNGQEIVRSLEEQNQESLVSVKETSVETAKSSDMEDIEPLKSADEDLEIINSAGAQESLWSMEVTRETTRPLEKEVQESLGFVGGNQEILRPLERGNEELGSLGKWNLEAVDSPEAVEEGRQPLGEEACLEMGEHQEPPRSLGEVEQGLPGSGNQQKWEDRAVENAAADQGPTLGRTGIESEDEAELPLSGQGEKEEDAEERELQLDAMGEAWSLASSEPQEPRVPSEGGSAGAPQGLEGQSEQVGVLGVPVGQGMPEVTEPLLQEDVAQAGKRDPIELTLGSDAATRAGLGLEQEVAGSGGSRHLAREEAIHPSLGEESVEAKIAHDLEGPGKEPKEAGALESEISELPRTSSDVLESKGCKQSEPVLGWAVEEASVEASDHEGSDAPEPRPSETEGDEGAQAALAPPGPKLMEPCSPTPILKDAYEWQPQAEGTRETGRQLEGGSASLERVEDEQEFGLGGIPEGLQDWEESREESEADELGETLPDSTPLGLYLRSPTSPKWDQAGEQRLSPQGEARKEGWGPAVPAAQGLSNPPGEEERGHDSDLSSEEFEDLGTEASLLPGLPKEVADHLGQVPPGPEPECWDQGGESDGFADEEESGEEGEEEEHEDGTESGAQWWGSGPSKVQHVTQRGDLQEHESVGISGPWDDGWRGAAAGISVTGLETESQDSAEPSGSEVSESVSSEGEDQAPDHLDTPQGVTNVVPGAGDTFGISGQAPNLESEHMNGRLENGLEQSEGQGVLDRHQDQGHPSQQQEVGALKAPLLGSPVHRGPSQSLEFPLSGADRDSWSSGED.

Positions 1-14 (WREKLEAEVQRQNL) are coil 1B. Positions 1–135 (WREKLEAEVQ…TLLEAENSRL (135 aa)) constitute an IF rod domain. The segment at 15–17 (YQE) is linker 2. Residues 18 to 135 (RVAHMESSLG…TLLEAENSRL (118 aa)) form a coil 2B region. Ser133 bears the Phosphoserine mark. The segment at 136 to 1818 (QTPGRSSQAS…DRDSWSSGED (1683 aa)) is tail. Phosphothreonine occurs at positions 137 and 160. Phosphoserine is present on Ser180. Phosphothreonine is present on Thr210. 4 disordered regions span residues 266–309 (EEAG…GSSI), 336–355 (AQETQEDGLHTEEIQDSQGP), 377–451 (HETP…SPEG), and 480–787 (AFKK…EEDQ). Ser288 carries the phosphoserine modification. Residues 292-303 (PVLEAKDGDSTE) show a composition bias toward basic and acidic residues. Residues 382–398 (KENCNSLRSVDENQGTL) are compositionally biased toward polar residues. Residues Ser390 and Ser400 each carry the phosphoserine modification. 2 stretches are compositionally biased toward basic and acidic residues: residues 400–427 (SPEEEKQTLLKSLEEKDVEVEKTLEKGV) and 434–443 (LGKEDPRIED). Ser448 carries the post-translational modification Phosphoserine. Basic and acidic residues predominate over residues 495–508 (EIQRVERLIEKEGQ). Ser513 carries the phosphoserine modification. 2 stretches are compositionally biased toward basic and acidic residues: residues 521–536 (TDRPLEKENGEPLKPV) and 565–586 (TDRPLEKEEDQLVERLVEKEGQ). Ser591 carries the post-translational modification Phosphoserine. 3 stretches are compositionally biased toward basic and acidic residues: residues 599 to 614 (TDRPLEKENGEPLKPV), 643 to 664 (TDRPLEKEEDQLVERLVEKEGQ), and 711 to 732 (TDRPLEKEEDQRVERLIEKEGQ). The residue at position 737 (Ser737) is a Phosphoserine. The span at 744 to 773 (ETYRLLEKENGEPLKPVEEEDQRVERLIEK) shows a compositional bias: basic and acidic residues. 2 positions are modified to phosphoserine: Ser803 and Ser824. A disordered region spans residues 866 to 900 (ESLLKKGTQESLESHEDRNQETQDPQRFLEEEGQG). A compositionally biased stretch (basic and acidic residues) spans 868 to 886 (LLKKGTQESLESHEDRNQE). Phosphoserine occurs at positions 915 and 957. Residues 945 to 998 (SLLERESQDSGKSLEGQEAFRCLGKEDPESLQFPEVQDQEIQRSLQQETQQTLG) are disordered. Positions 986–997 (QRSLQQETQQTL) are enriched in polar residues. Residue Lys1043 forms a Glycyl lysine isopeptide (Lys-Gly) (interchain with G-Cter in SUMO1); alternate linkage. A Glycyl lysine isopeptide (Lys-Gly) (interchain with G-Cter in SUMO2); alternate cross-link involves residue Lys1043. 7 positions are modified to phosphoserine: Ser1052, Ser1063, Ser1073, Ser1123, Ser1134, Ser1162, and Ser1238. 2 disordered regions span residues 1134 to 1262 (SPEA…LEGQ) and 1334 to 1818 (HPSL…SGED). Basic and acidic residues-rich tracts occupy residues 1342–1361 (VEAKIAHDLEGPGKEPKEAG) and 1401–1416 (ASDHEGSDAPEPRPSE). Over residues 1490-1505 (QDWEESREESEADELG) the composition is skewed to acidic residues. Ser1495, Ser1499, and Ser1523 each carry phosphoserine. Residues 1570-1579 (LSSEEFEDLG) show a composition bias toward acidic residues. 2 positions are modified to phosphoserine: Ser1614 and Ser1623. Acidic residues predominate over residues 1616 to 1636 (GFADEEESGEEGEEEEHEDGT). The span at 1686-1697 (GLETESQDSAEP) shows a compositional bias: polar residues. Phosphoserine occurs at positions 1698, 1700, 1791, 1814, and 1815. The segment covering 1698–1708 (SGSEVSESVSS) has biased composition (low complexity).

It belongs to the intermediate filament family. Interacts with FHOD3. Forms homodimers and homotetramers in vitro. In mixtures with other intermediate filament proteins such as vimentin and alpha-internexin, preferentially forms heterodimers which can assemble to form intermediate filaments if nestin does not exceed 25%. Post-translationally, constitutively phosphorylated. This increases during mitosis when the cytoplasmic intermediate filament network is reorganized.

Its function is as follows. Required for brain and eye development. Promotes the disassembly of phosphorylated vimentin intermediate filaments (IF) during mitosis and may play a role in the trafficking and distribution of IF proteins and other cellular factors to daughter cells during progenitor cell division. Required for survival, renewal and mitogen-stimulated proliferation of neural progenitor cells. This chain is Nestin, found in Mesocricetus auratus (Golden hamster).